Consider the following 957-residue polypeptide: UvrABC system protein A (957 aa).

Position 33-40 (33-40) interacts with ATP; sequence GLSGSGKS. The C4-type zinc finger occupies 252–279; that stretch reads CPHCGFSIGELEPRLFSFNSPFGACPTC. ABC transporter domains lie at 309-587 and 607-935; these read WTPI…PNSL and PDGR…RYLK. 639 to 646 serves as a coordination point for ATP; sequence GVSGSGKS. Residues 738 to 764 form a C4-type zinc finger; that stretch reads CEACRGDGIIKIEMHFLPDVYVPCEVC.

Belongs to the ABC transporter superfamily. UvrA family. Forms a heterotetramer with UvrB during the search for lesions.

Its subcellular location is the cytoplasm. The UvrABC repair system catalyzes the recognition and processing of DNA lesions. UvrA is an ATPase and a DNA-binding protein. A damage recognition complex composed of 2 UvrA and 2 UvrB subunits scans DNA for abnormalities. When the presence of a lesion has been verified by UvrB, the UvrA molecules dissociate. This is UvrABC system protein A from Bacillus subtilis (strain 168).